The following is a 364-amino-acid chain: Mitogen-activated protein kinase 11 (364 aa).

The Protein kinase domain occupies 24–308 (LQGLRPVGSG…AAEALAHAYF (285 aa)). Residues 30–38 (VGSGAYGSV) and lysine 53 contribute to the ATP site. Glutamate 71 provides a ligand contact to nilotinib. Aspartate 168 acts as the Proton acceptor in catalysis. Phosphothreonine; by MAP2K3, MAP2K4 and MAP2K6 is present on threonine 180. A TXY motif is present at residues 180 to 182 (TGY). Tyrosine 182 carries the phosphotyrosine; by MAP2K3, MAP2K4 and MAP2K6 modification. The segment at 312–331 (HDPDDEPEAEPYDESVEAKE) is disordered. Acidic residues predominate over residues 314-326 (PDDEPEAEPYDES). The residue at position 323 (tyrosine 323) is a Phosphotyrosine; by ZAP70.

Belongs to the protein kinase superfamily. CMGC Ser/Thr protein kinase family. MAP kinase subfamily. As to quaternary structure, interacts with HDAC3 and DUSP16. Requires Mg(2+) as cofactor. Post-translationally, dually phosphorylated on Thr-180 and Tyr-182 by MAP2K3/MKK3, MAP2K4/MKK4 and MAP2K6/MKK6, which activates the enzyme.

The protein resides in the cytoplasm. It is found in the nucleus. It catalyses the reaction L-seryl-[protein] + ATP = O-phospho-L-seryl-[protein] + ADP + H(+). The enzyme catalyses L-threonyl-[protein] + ATP = O-phospho-L-threonyl-[protein] + ADP + H(+). With respect to regulation, activated by phosphorylation on threonine and tyrosine by MAP2K3/MKK3, MAP2K4/MKK4 and MAP2K6/MKK6. MAP2K3/MKK3 and MAP2K6/MKK6 are both essential for the activation of MAPK11 induced by environmental stress. HDAC3 interacts directly and selectively with MAPK11 to repress ATF2 transcriptional activity, and regulate TNF gene expression in LPS-stimulated cells. Inhibited by SB203580 and pyridinyl-imidazole related compounds. Serine/threonine kinase which acts as an essential component of the MAP kinase signal transduction pathway. MAPK11 is one of the four p38 MAPKs which play an important role in the cascades of cellular responses evoked by extracellular stimuli such as pro-inflammatory cytokines or physical stress leading to direct activation of transcription factors. Accordingly, p38 MAPKs phosphorylate a broad range of proteins and it has been estimated that they may have approximately 200 to 300 substrates each. MAPK11 functions are mostly redundant with those of MAPK14. Some of the targets are downstream kinases which are activated through phosphorylation and further phosphorylate additional targets. RPS6KA5/MSK1 and RPS6KA4/MSK2 can directly phosphorylate and activate transcription factors such as CREB1, ATF1, the NF-kappa-B isoform RELA/NFKB3, STAT1 and STAT3, but can also phosphorylate histone H3 and the nucleosomal protein HMGN1. RPS6KA5/MSK1 and RPS6KA4/MSK2 play important roles in the rapid induction of immediate-early genes in response to stress or mitogenic stimuli, either by inducing chromatin remodeling or by recruiting the transcription machinery. On the other hand, two other kinase targets, MAPKAPK2/MK2 and MAPKAPK3/MK3, participate in the control of gene expression mostly at the post-transcriptional level, by phosphorylating ZFP36 (tristetraprolin) and ELAVL1, and by regulating EEF2K, which is important for the elongation of mRNA during translation. MKNK1/MNK1 and MKNK2/MNK2, two other kinases activated by p38 MAPKs, regulate protein synthesis by phosphorylating the initiation factor EIF4E2. In the cytoplasm, the p38 MAPK pathway is an important regulator of protein turnover. For example, CFLAR is an inhibitor of TNF-induced apoptosis whose proteasome-mediated degradation is regulated by p38 MAPK phosphorylation. Ectodomain shedding of transmembrane proteins is regulated by p38 MAPKs as well. In response to inflammatory stimuli, p38 MAPKs phosphorylate the membrane-associated metalloprotease ADAM17. Such phosphorylation is required for ADAM17-mediated ectodomain shedding of TGF-alpha family ligands, which results in the activation of EGFR signaling and cell proliferation. Additional examples of p38 MAPK substrates are the FGFR1. FGFR1 can be translocated from the extracellular space into the cytosol and nucleus of target cells, and regulates processes such as rRNA synthesis and cell growth. FGFR1 translocation requires p38 MAPK activation. In the nucleus, many transcription factors are phosphorylated and activated by p38 MAPKs in response to different stimuli. Classical examples include ATF1, ATF2, ATF6, ELK1, PTPRH, DDIT3, TP53/p53 and MEF2C and MEF2A. The p38 MAPKs are emerging as important modulators of gene expression by regulating chromatin modifiers and remodelers. The promoters of several genes involved in the inflammatory response, such as IL6, IL8 and IL12B, display a p38 MAPK-dependent enrichment of histone H3 phosphorylation on 'Ser-10' (H3S10ph) in LPS-stimulated myeloid cells. This phosphorylation enhances the accessibility of the cryptic NF-kappa-B-binding sites marking promoters for increased NF-kappa-B recruitment. Phosphorylates methyltransferase DOT1L on 'Ser-834', 'Thr-900', 'Ser-902', 'Thr-984', 'Ser-1001', 'Ser-1009' and 'Ser-1104'. The sequence is that of Mitogen-activated protein kinase 11 (Mapk11) from Mus musculus (Mouse).